The primary structure comprises 129 residues: Small ribosomal subunit protein uS11 (129 aa).

This sequence belongs to the universal ribosomal protein uS11 family. As to quaternary structure, part of the 30S ribosomal subunit. Interacts with proteins S7 and S18. Binds to IF-3.

Located on the platform of the 30S subunit, it bridges several disparate RNA helices of the 16S rRNA. Forms part of the Shine-Dalgarno cleft in the 70S ribosome. The protein is Small ribosomal subunit protein uS11 of Nitratidesulfovibrio vulgaris (strain ATCC 29579 / DSM 644 / CCUG 34227 / NCIMB 8303 / VKM B-1760 / Hildenborough) (Desulfovibrio vulgaris).